A 225-amino-acid polypeptide reads, in one-letter code: NAD(P)H-quinone oxidoreductase subunit K, chloroplastic (225 aa).

[4Fe-4S] cluster is bound by residues Cys43, Cys44, Cys108, and Cys139.

The protein belongs to the complex I 20 kDa subunit family. NDH is composed of at least 16 different subunits, 5 of which are encoded in the nucleus. The cofactor is [4Fe-4S] cluster.

The protein resides in the plastid. It localises to the chloroplast thylakoid membrane. It carries out the reaction a plastoquinone + NADH + (n+1) H(+)(in) = a plastoquinol + NAD(+) + n H(+)(out). It catalyses the reaction a plastoquinone + NADPH + (n+1) H(+)(in) = a plastoquinol + NADP(+) + n H(+)(out). Its function is as follows. NDH shuttles electrons from NAD(P)H:plastoquinone, via FMN and iron-sulfur (Fe-S) centers, to quinones in the photosynthetic chain and possibly in a chloroplast respiratory chain. The immediate electron acceptor for the enzyme in this species is believed to be plastoquinone. Couples the redox reaction to proton translocation, and thus conserves the redox energy in a proton gradient. The chain is NAD(P)H-quinone oxidoreductase subunit K, chloroplastic from Helianthus annuus (Common sunflower).